Reading from the N-terminus, the 867-residue chain is Putative tyrosine-protein kinase F09A5.2 (867 aa).

Helical transmembrane passes span 45–65 and 355–375; these read VMKI…FATS and LLLI…AFFV. 2 N-linked (GlcNAc...) asparagine glycosylation sites follow: Asn-395 and Asn-423. Positions 467–757 constitute a Protein kinase domain; that stretch reads VQEDHLLGNG…FNEMRGEITV (291 aa). 473 to 481 provides a ligand contact to ATP; it reads LGNGAFANV. N-linked (GlcNAc...) asparagine glycans are attached at residues Asn-496 and Asn-500. Lys-516 serves as a coordination point for ATP. Asn-585 is a glycosylation site (N-linked (GlcNAc...) asparagine). The active-site Proton acceptor is Asp-626. 2 disordered regions span residues 782-821 and 848-867; these read LTMQ…GTCA and SKSM…TYQS. A compositionally biased stretch (acidic residues) spans 801–810; it reads DMDEDGDYDS. Residues 858–867 are compositionally biased toward polar residues; it reads SNSTVSTYQS. The N-linked (GlcNAc...) asparagine glycan is linked to Asn-859.

Belongs to the protein kinase superfamily. Tyr protein kinase family.

Its subcellular location is the membrane. It catalyses the reaction L-tyrosyl-[protein] + ATP = O-phospho-L-tyrosyl-[protein] + ADP + H(+). The chain is Putative tyrosine-protein kinase F09A5.2 from Caenorhabditis elegans.